The following is a 105-amino-acid chain: UPF0045 protein ECM15 (105 aa).

This sequence belongs to the UPF0045 family.

The polypeptide is UPF0045 protein ECM15 (ECM15) (Eremothecium gossypii (strain ATCC 10895 / CBS 109.51 / FGSC 9923 / NRRL Y-1056) (Yeast)).